Reading from the N-terminus, the 630-residue chain is Biosynthetic arginine decarboxylase (630 aa).

K99 is modified (N6-(pyridoxal phosphate)lysine). 281 to 291 lines the substrate pocket; the sequence is VDIGGGLGVDY.

The protein belongs to the Orn/Lys/Arg decarboxylase class-II family. SpeA subfamily. The cofactor is Mg(2+). Pyridoxal 5'-phosphate is required as a cofactor.

It carries out the reaction L-arginine + H(+) = agmatine + CO2. It functions in the pathway amine and polyamine biosynthesis; agmatine biosynthesis; agmatine from L-arginine: step 1/1. Its function is as follows. Catalyzes the biosynthesis of agmatine from arginine. The polypeptide is Biosynthetic arginine decarboxylase (Bacteroides fragilis (strain ATCC 25285 / DSM 2151 / CCUG 4856 / JCM 11019 / LMG 10263 / NCTC 9343 / Onslow / VPI 2553 / EN-2)).